Consider the following 129-residue polypeptide: Small ribosomal subunit protein uS12 (129 aa).

Aspartate 89 carries the 3-methylthioaspartic acid modification.

Belongs to the universal ribosomal protein uS12 family. As to quaternary structure, part of the 30S ribosomal subunit. Contacts proteins S8 and S17. May interact with IF1 in the 30S initiation complex.

Its function is as follows. With S4 and S5 plays an important role in translational accuracy. Interacts with and stabilizes bases of the 16S rRNA that are involved in tRNA selection in the A site and with the mRNA backbone. Located at the interface of the 30S and 50S subunits, it traverses the body of the 30S subunit contacting proteins on the other side and probably holding the rRNA structure together. The combined cluster of proteins S8, S12 and S17 appears to hold together the shoulder and platform of the 30S subunit. The chain is Small ribosomal subunit protein uS12 from Rickettsia akari (strain Hartford).